We begin with the raw amino-acid sequence, 79 residues long: Hematopoietic cell signal transducer (79 aa).

A signal peptide spans 1-18 (MIHPGHILFLLLLPVAAA). At 19-34 (QTTPGSCSGCGSLSLP) the chain is on the extracellular side. A helical membrane pass occupies residues 35–55 (LLAGLVAADAVASPLIVGAVF). The Cytoplasmic segment spans residues 56-79 (LCARPRRSPAQGDGKVYINMPGRG). Phosphotyrosine is present on tyrosine 72. A GRB2 binding site region spans residues 72 to 74 (YIN). The PIK3R1 binding site stretch occupies residues 72 to 75 (YINM).

It belongs to the DAP10 family. Homodimer; Disulfide-linked. Heterohexamer composed of four subunits of HCST/DAP10 and two subunits of KLRK1. Interacts (via transmembrane domain) with KLRK1 (via transmembrane domain); the interaction is required for KLRK1 NK cell surface and induces NK cell-mediated cytotoxicity. Interacts with PIK3R1 and GRB2. Interacts with CLEC5A. Forms an CLEC5A/TYROBP/HCST trimolecular complex depending almost solely on TYROBP. Interacts with CD300H. Phosphorylated; PIK3R1 and GRB2 associate specifically with tyrosine-phosphorylated HCST. In terms of processing, O-glycosylated.

It localises to the membrane. Transmembrane adapter protein which associates with KLRK1 to form an activation receptor KLRK1-HCST in lymphoid and myeloid cells; this receptor plays a major role in triggering cytotoxicity against target cells expressing cell surface ligands such as MHC class I chain-related MICA and MICB, and UL16-binding proteins (ULBPs); these ligands are up-regulated by stress conditions and pathological state such as viral infection and tumor transformation. Functions as a docking site for PI3-kinase PIK3R1 and GRB2. Interaction of ULBPs with KLRK1-HCST triggers calcium mobilization and activation of the PIK3R1, MAP2K/ERK, and JAK2/STAT5 signaling pathways. Both PIK3R1 and GRB2 are required for full KLRK1-HCST-mediated activation and ultimate killing of target cells. In NK cells, KLRK1-HCST signaling directly induces cytotoxicity and enhances cytokine production initiated via DAP12/TYROBP-associated receptors. In T-cells, it provides primarily costimulation for TCR-induced signals. KLRK1-HCST receptor plays a role in immune surveillance against tumors and is required for cytolysis of tumors cells; indeed, melanoma cells that do not express KLRK1 ligands escape from immune surveillance mediated by NK cells. This chain is Hematopoietic cell signal transducer (HCST), found in Macaca mulatta (Rhesus macaque).